The following is a 209-amino-acid chain: Uridine kinase (209 aa).

12 to 19 (GGSGSGKT) serves as a coordination point for ATP.

It belongs to the uridine kinase family.

The protein localises to the cytoplasm. It carries out the reaction uridine + ATP = UMP + ADP + H(+). The enzyme catalyses cytidine + ATP = CMP + ADP + H(+). The protein operates within pyrimidine metabolism; CTP biosynthesis via salvage pathway; CTP from cytidine: step 1/3. Its pathway is pyrimidine metabolism; UMP biosynthesis via salvage pathway; UMP from uridine: step 1/1. This chain is Uridine kinase, found in Listeria innocua serovar 6a (strain ATCC BAA-680 / CLIP 11262).